The following is a 396-amino-acid chain: ATP-dependent RNA helicase eIF4A (396 aa).

The Q motif motif lies at 22 to 50 (YSFDDLKLKEELLRGIFGYGFVEPSAIQQ). Residues 53–223 (ILPIIEGKDV…SKFMKDPVRI (171 aa)) form the Helicase ATP-binding domain. 66 to 73 (AQSGTGKT) contributes to the ATP binding site. Positions 171–174 (DEAD) match the DEAD box motif. Residues 234–395 (GIGQYYVNVE…ELPSSISELF (162 aa)) enclose the Helicase C-terminal domain.

Belongs to the DEAD box helicase family. eIF4A subfamily. Component of the eIF4F complex, which composition varies with external and internal environmental conditions. It is composed of at least eIF4A, eIF4E and eIF4G.

It is found in the cytoplasm. It catalyses the reaction ATP + H2O = ADP + phosphate + H(+). Functionally, ATP-dependent RNA helicase which is a subunit of the eIF4F complex involved in cap recognition and is required for mRNA binding to ribosome. In the current model of translation initiation, eIF4A unwinds RNA secondary structures in the 5'-UTR of mRNAs which is necessary to allow efficient binding of the small ribosomal subunit, and subsequent scanning for the initiator codon. This is ATP-dependent RNA helicase eIF4A (TIF1) from Kluyveromyces lactis (strain ATCC 8585 / CBS 2359 / DSM 70799 / NBRC 1267 / NRRL Y-1140 / WM37) (Yeast).